The primary structure comprises 602 residues: MEKEVIAYLDNETIIDSQSVKNTNLKEIYFDNSKESLEVIRHSCAHLMAQAIKSLYPEAKFFVGPVIEDGFYYDFRVESKIGEEDLVKIEKKMKELAEAKIEISKYEITKNEALAKFQNDDLKQEVLLRIPDGAVSIYKQGEFEDLCRGPHVPNTKFLRFFKLTRVAGAYLDGDEKREMLTRIYGTAFADKESLKEYLTIIEEAKKRDHRKLGTELKLFTFDDEIGGGLPIWLSNGARLRSKLEHMLYKIHRLRGYEPVRGPELLKADAWKISGHYANYKENMYFTQIDEQEYGIKPMNCVGHIKIYQSDVRSYRDLPLKFFEYGVVHRHEKSGVLHGLFRVREFTQDDAHIFCMPSQIKEQVLEILAFVDNLMKLFDFSYEMEISTKPEKAIGDDEIWEVATKALKEALDEQGLKYGIDEGGGAFYGPKIDIKITDALKRKWQCGTIQVDFNLPSRFKLEYTDSDNEKKQPVMLHRAILGSFERFIGILTEHCAGEFPFFIAPTAVGIVPIGEAHIAYAKEIQKELLELNIDSEVYEKNESLSKKIRIAEKQKLPMILVLGDDEVAKRSVALRDRRAKEQKNLSLDEFIKLVKEKMSEVHF.

The interval 208-499 is catalytic; it reads DHRKLGTELK…LTEHCAGEFP (292 aa). 3 residues coordinate Zn(2+): Cys300, His351, and His476.

This sequence belongs to the class-II aminoacyl-tRNA synthetase family. In terms of assembly, homodimer. Requires Zn(2+) as cofactor.

It is found in the cytoplasm. It catalyses the reaction tRNA(Thr) + L-threonine + ATP = L-threonyl-tRNA(Thr) + AMP + diphosphate + H(+). In terms of biological role, catalyzes the attachment of threonine to tRNA(Thr) in a two-step reaction: L-threonine is first activated by ATP to form Thr-AMP and then transferred to the acceptor end of tRNA(Thr). Also edits incorrectly charged L-seryl-tRNA(Thr). This Campylobacter jejuni (strain RM1221) protein is Threonine--tRNA ligase.